The chain runs to 61 residues: Small ribosomal subunit protein uS14 (61 aa).

Zn(2+)-binding residues include Cys24, Cys27, Cys40, and Cys43.

It belongs to the universal ribosomal protein uS14 family. Zinc-binding uS14 subfamily. As to quaternary structure, part of the 30S ribosomal subunit. Contacts proteins S3 and S10. Zn(2+) is required as a cofactor.

In terms of biological role, binds 16S rRNA, required for the assembly of 30S particles and may also be responsible for determining the conformation of the 16S rRNA at the A site. This chain is Small ribosomal subunit protein uS14, found in Ureaplasma parvum serovar 3 (strain ATCC 27815 / 27 / NCTC 11736).